The chain runs to 75 residues: MNHLIILVVAAVFLGMASAEDVFHKRFTVSCLCASDGPSVHGNKLTGTVAVGGCNPGWHKCNTEHNVLYECCKKN.

A signal peptide spans 1 to 19 (MNHLIILVVAAVFLGMASA). Positions 20-26 (EDVFHKR) are excised as a propeptide. Disulfide bonds link C31–C71, C33–C61, and C54–C72.

The protein belongs to the sea anemone sodium channel inhibitory toxin family. Type I subfamily. Contains 3 disulfide bonds.

The protein resides in the secreted. Its subcellular location is the nematocyst. Functionally, toxin that is lethal to crab. The sequence is that of U-stichotoxin-Hau3a from Heteractis aurora (Banded sea anemone).